A 121-amino-acid polypeptide reads, in one-letter code: Large ribosomal subunit protein bL12 (121 aa).

The protein belongs to the bacterial ribosomal protein bL12 family. As to quaternary structure, homodimer. Part of the ribosomal stalk of the 50S ribosomal subunit. Forms a multimeric L10(L12)X complex, where L10 forms an elongated spine to which 2 to 4 L12 dimers bind in a sequential fashion. Binds GTP-bound translation factors.

Forms part of the ribosomal stalk which helps the ribosome interact with GTP-bound translation factors. Is thus essential for accurate translation. The polypeptide is Large ribosomal subunit protein bL12 (Streptococcus agalactiae serotype Ia (strain ATCC 27591 / A909 / CDC SS700)).